The primary structure comprises 77 residues: U8-lycotoxin-Ls1m (77 aa).

An N-terminal signal peptide occupies residues 1-20; it reads MKLMIFTGLVLFAIVSLIEA. A propeptide spanning residues 21–26 is cleaved from the precursor; sequence QAENEK.

Belongs to the neurotoxin 19 (CSTX) family. 08 (U8-Lctx) subfamily. Post-translationally, contains 4 disulfide bonds. As to expression, expressed by the venom gland.

Its subcellular location is the secreted. This chain is U8-lycotoxin-Ls1m, found in Lycosa singoriensis (Wolf spider).